Consider the following 361-residue polypeptide: Probable mannose-1-phosphate guanylyltransferase 3 (361 aa).

Residues Leu6 and Val7 each coordinate GDP-alpha-D-mannose. Positions 9, 11, 12, 13, and 23 each coordinate diphosphate. GDP-alpha-D-mannose is bound by residues Gly85, Asn109, Asp111, Gly146, and Asn173.

Belongs to the transferase hexapeptide repeat family.

The catalysed reaction is alpha-D-mannose 1-phosphate + GTP + H(+) = GDP-alpha-D-mannose + diphosphate. The protein operates within nucleotide-sugar biosynthesis; GDP-alpha-D-mannose biosynthesis; GDP-alpha-D-mannose from alpha-D-mannose 1-phosphate (GTP route): step 1/1. Catalyzes a reaction of the Smirnoff-Wheeler pathway, the major route to ascorbate biosynthesis in plants. In Oryza sativa subsp. japonica (Rice), this protein is Probable mannose-1-phosphate guanylyltransferase 3.